A 345-amino-acid polypeptide reads, in one-letter code: Hydroxymethylglutaryl-CoA synthase (345 aa).

Residue D28 participates in (3S)-3-hydroxy-3-methylglutaryl-CoA binding. The active-site Proton donor/acceptor is E80. (3S)-3-hydroxy-3-methylglutaryl-CoA is bound by residues C112 and T153. C112 serves as the catalytic Acyl-thioester intermediate. R199 is a binding site for CoA. Residues T201 and H234 each coordinate (3S)-3-hydroxy-3-methylglutaryl-CoA. H234 serves as the catalytic Proton donor/acceptor. CoA is bound at residue K239. (3S)-3-hydroxy-3-methylglutaryl-CoA contacts are provided by R243, N266, and S296.

This sequence belongs to the thiolase-like superfamily. Archaeal HMG-CoA synthase family. In terms of assembly, interacts with acetoacetyl-CoA thiolase that catalyzes the precedent step in the pathway and with a DUF35 protein. The acetoacetyl-CoA thiolase/HMG-CoA synthase complex channels the intermediate via a fused CoA-binding site, which allows for efficient coupling of the endergonic thiolase reaction with the exergonic HMGCS reaction.

It catalyses the reaction acetoacetyl-CoA + acetyl-CoA + H2O = (3S)-3-hydroxy-3-methylglutaryl-CoA + CoA + H(+). It functions in the pathway metabolic intermediate biosynthesis; (R)-mevalonate biosynthesis; (R)-mevalonate from acetyl-CoA: step 2/3. Functionally, catalyzes the condensation of acetyl-CoA with acetoacetyl-CoA to form 3-hydroxy-3-methylglutaryl-CoA (HMG-CoA). Functions in the mevalonate (MVA) pathway leading to isopentenyl diphosphate (IPP), a key precursor for the biosynthesis of isoprenoid compounds that are building blocks of archaeal membrane lipids. The protein is Hydroxymethylglutaryl-CoA synthase of Methanobrevibacter smithii (strain ATCC 35061 / DSM 861 / OCM 144 / PS).